We begin with the raw amino-acid sequence, 1399 residues long: DNA-directed RNA polymerase subunit beta' (1399 aa).

Zn(2+) contacts are provided by Cys70, Cys72, Cys85, and Cys88. Mg(2+)-binding residues include Asp460, Asp462, and Asp464. Cys814, Cys888, Cys895, and Cys898 together coordinate Zn(2+).

This sequence belongs to the RNA polymerase beta' chain family. As to quaternary structure, the RNAP catalytic core consists of 2 alpha, 1 beta, 1 beta' and 1 omega subunit. When a sigma factor is associated with the core the holoenzyme is formed, which can initiate transcription. The cofactor is Mg(2+). Requires Zn(2+) as cofactor.

The catalysed reaction is RNA(n) + a ribonucleoside 5'-triphosphate = RNA(n+1) + diphosphate. In terms of biological role, DNA-dependent RNA polymerase catalyzes the transcription of DNA into RNA using the four ribonucleoside triphosphates as substrates. The sequence is that of DNA-directed RNA polymerase subunit beta' from Pseudomonas savastanoi pv. phaseolicola (strain 1448A / Race 6) (Pseudomonas syringae pv. phaseolicola (strain 1448A / Race 6)).